Consider the following 130-residue polypeptide: Small ribosomal subunit protein uS11c (130 aa).

The protein belongs to the universal ribosomal protein uS11 family. In terms of assembly, part of the 30S ribosomal subunit.

It localises to the plastid. The protein resides in the chloroplast. The polypeptide is Small ribosomal subunit protein uS11c (Tupiella akineta (Green alga)).